We begin with the raw amino-acid sequence, 319 residues long: uncharacterized protein (319 aa).

This is an uncharacterized protein from Bacillus subtilis (strain 168).